A 505-amino-acid polypeptide reads, in one-letter code: 2,3-bisphosphoglycerate-independent phosphoglycerate mutase (505 aa).

Asp-11 and Ser-61 together coordinate Mn(2+). Residue Ser-61 is the Phosphoserine intermediate of the active site. Residues His-122, 152-153 (RD), Arg-184, Arg-190, 258-261 (RPDR), and Lys-331 contribute to the substrate site. Asp-396, His-400, Asp-437, His-438, and His-455 together coordinate Mn(2+).

This sequence belongs to the BPG-independent phosphoglycerate mutase family. In terms of assembly, monomer. Mn(2+) serves as cofactor.

It catalyses the reaction (2R)-2-phosphoglycerate = (2R)-3-phosphoglycerate. It participates in carbohydrate degradation; glycolysis; pyruvate from D-glyceraldehyde 3-phosphate: step 3/5. In terms of biological role, catalyzes the interconversion of 2-phosphoglycerate and 3-phosphoglycerate. This is 2,3-bisphosphoglycerate-independent phosphoglycerate mutase from Mesomycoplasma hyopneumoniae (strain 7448) (Mycoplasma hyopneumoniae).